The sequence spans 191 residues: Large ribosomal subunit protein uL5 (191 aa).

The protein belongs to the universal ribosomal protein uL5 family. In terms of assembly, part of the 50S ribosomal subunit; part of the 5S rRNA/L5/L18/L25 subcomplex. Contacts the 5S rRNA and the P site tRNA. Forms a bridge to the 30S subunit in the 70S ribosome.

This is one of the proteins that bind and probably mediate the attachment of the 5S RNA into the large ribosomal subunit, where it forms part of the central protuberance. In the 70S ribosome it contacts protein S13 of the 30S subunit (bridge B1b), connecting the 2 subunits; this bridge is implicated in subunit movement. Contacts the P site tRNA; the 5S rRNA and some of its associated proteins might help stabilize positioning of ribosome-bound tRNAs. The sequence is that of Large ribosomal subunit protein uL5 from Thermobifida fusca (strain YX).